Consider the following 250-residue polypeptide: Uracil-DNA glycosylase (250 aa).

The Proton acceptor role is filled by aspartate 78.

Belongs to the uracil-DNA glycosylase (UDG) superfamily. UNG family.

The protein resides in the cytoplasm. It carries out the reaction Hydrolyzes single-stranded DNA or mismatched double-stranded DNA and polynucleotides, releasing free uracil.. Functionally, excises uracil residues from the DNA which can arise as a result of misincorporation of dUMP residues by DNA polymerase or due to deamination of cytosine. In Albidiferax ferrireducens (strain ATCC BAA-621 / DSM 15236 / T118) (Rhodoferax ferrireducens), this protein is Uracil-DNA glycosylase.